Reading from the N-terminus, the 383-residue chain is Ovalbumin (383 aa).

G2 bears the N-acetylglycine mark. Positions 22-48 (HHANDNMLYSPFAILSTLAMVFLGAKD) form a signal peptide, not cleaved. A Phosphoserine modification is found at S69. C74 and C121 form a disulfide bridge. N-linked (GlcNAc...) asparagine glycosylation is found at N293 and N312. At S345 the chain carries Phosphoserine.

The protein belongs to the serpin family. Ov-serpin subfamily. In terms of processing, the signal sequence is not cleaved. The functional signal for membrane translocation of ovalbumin becomes accessible when the nascent chain is 50 to 60 residues long. The hydrophobic sequence which lies between residues 27 and 43 folds back on the preceding residues to form an amphipathic hairpin structure which is the signal element recognized by the membrane. Major protein of egg white.

It is found in the secreted. Functionally, storage protein of egg white. Lack protease inhibitory activity. In Coturnix coturnix (Common quail), this protein is Ovalbumin (SERPINB14).